The following is an 81-amino-acid chain: Bacteriochlorophyll c-binding protein (81 aa).

His25 contributes to the a bacteriochlorophyll c binding site.

It belongs to the BChl C/E-binding protein family.

It localises to the chlorosome. The protein resides in the chlorosome envelope. In terms of biological role, component of the photosynthetic apparatus. The light harvesting B740 complex binds bacteriochlorophyll c. The chain is Bacteriochlorophyll c-binding protein (csmA) from Prosthecochloris aestuarii (strain DSM 271 / SK 413).